We begin with the raw amino-acid sequence, 624 residues long: Chaperone protein HtpG (624 aa).

Residues 1–336 (MKGQETRGFQ…SNDLPLNVSR (336 aa)) are a; substrate-binding. Residues 337 to 552 (EILQDSSITR…NDEMSTQMAK (216 aa)) are b. The segment at 553–624 (LFAAAGQAVP…IRRMNQLLVS (72 aa)) is c.

It belongs to the heat shock protein 90 family. As to quaternary structure, homodimer.

It is found in the cytoplasm. In terms of biological role, molecular chaperone. Has ATPase activity. The chain is Chaperone protein HtpG from Cronobacter sakazakii (strain ATCC BAA-894) (Enterobacter sakazakii).